Consider the following 138-residue polypeptide: ATP synthase epsilon chain, chloroplastic (138 aa).

Belongs to the ATPase epsilon chain family. In terms of assembly, F-type ATPases have 2 components, CF(1) - the catalytic core - and CF(0) - the membrane proton channel. CF(1) has five subunits: alpha(3), beta(3), gamma(1), delta(1), epsilon(1). CF(0) has three main subunits: a, b and c.

It localises to the plastid. It is found in the chloroplast thylakoid membrane. Its function is as follows. Produces ATP from ADP in the presence of a proton gradient across the membrane. This is ATP synthase epsilon chain, chloroplastic from Anthoceros angustus (Hornwort).